The sequence spans 99 residues: Integration host factor subunit alpha (99 aa).

This sequence belongs to the bacterial histone-like protein family. As to quaternary structure, heterodimer of an alpha and a beta chain.

Functionally, this protein is one of the two subunits of integration host factor, a specific DNA-binding protein that functions in genetic recombination as well as in transcriptional and translational control. This Psychrobacter arcticus (strain DSM 17307 / VKM B-2377 / 273-4) protein is Integration host factor subunit alpha.